A 61-amino-acid polypeptide reads, in one-letter code: MSRTSLEVKAQRKPKFSARAYNRCPVCGRPRAYMRKFGLCRICFRNMALRGELPGVRKSSW.

Cysteine 24, cysteine 27, cysteine 40, and cysteine 43 together coordinate Zn(2+).

Belongs to the universal ribosomal protein uS14 family. Zinc-binding uS14 subfamily. As to quaternary structure, part of the 30S ribosomal subunit. Contacts proteins S3 and S10. The cofactor is Zn(2+).

Its function is as follows. Binds 16S rRNA, required for the assembly of 30S particles and may also be responsible for determining the conformation of the 16S rRNA at the A site. The chain is Small ribosomal subunit protein uS14 from Nitratidesulfovibrio vulgaris (strain DSM 19637 / Miyazaki F) (Desulfovibrio vulgaris).